A 93-amino-acid chain; its full sequence is DNA-binding protein Fis (93 aa).

The H-T-H motif DNA-binding region spans 74–93 (QTRAAQMMGINRGTLRKKLK).

Belongs to the transcriptional regulatory Fis family. Homodimer.

Its function is as follows. Activates ribosomal RNA transcription. Plays a direct role in upstream activation of rRNA promoters. This chain is DNA-binding protein Fis, found in Proteus vulgaris.